Consider the following 377-residue polypeptide: Guanine nucleotide-binding protein subunit alpha-13 (377 aa).

Residues C14 and C18 are each lipidated (S-palmitoyl cysteine). One can recognise a G-alpha domain in the interval 47–377; it reads RLVKILLLGA…HDNLKQLMLQ (331 aa). Residues 50-63 are G1 motif; sequence KILLLGAGESGKST. GTP is bound by residues 58-63, S173, and 197-200; these read ESGKST and LLAR. S62 contributes to the Mg(2+) binding site. The tract at residues 195-203 is G2 motif; that stretch reads DILLARRPT. T203 contributes to the Mg(2+) binding site. T203 is subject to Phosphothreonine; by PKA. The tract at residues 218–227 is G3 motif; the sequence is FKMVDVGGQR. Residues 287–294 form a G4 motif region; it reads ILFLNKTD. Residues 291–294 and A349 contribute to the GTP site; that span reads NKTD. The tract at residues 347–352 is G5 motif; that stretch reads TTAINT.

Belongs to the G-alpha family. G(12) subfamily. In terms of assembly, g proteins are composed of 3 units; alpha, beta and gamma. The alpha chain contains the guanine nucleotide binding site. Interacts with UBXD5. Interacts with HAX1. Interacts (in GTP-bound form) with PPP5C (via TPR repeats); activates PPP5C phosphatase activity and translocates PPP5C to the cell membrane. Interacts with RGS22. Interacts with ARHGEF1. Interacts (in GTP-bound form) with ARHGEF11 (via RGS domain). Interacts (in GTP-bound form) with ARHGEF12 (via RGS domain). Interacts (in GTP-bound form) with CTNND1. Interacts with GAS2L2. Interacts with GPR35. Interacts with GPR174. Palmitoylation is critical for proper membrane localization and signaling. Post-translationally, phosphorylation on Thr-203 by PKA destabilizes the heterotrimer of alpha, beta and gamma, and inhibits Rho activation.

The protein localises to the membrane. Its subcellular location is the melanosome. It localises to the cytoplasm. The protein resides in the nucleus. Its function is as follows. Guanine nucleotide-binding proteins (G proteins) are involved as modulators or transducers in various transmembrane signaling systems. Activates effector molecule RhoA by binding and activating RhoGEFs (ARHGEF1/p115RhoGEF, ARHGEF11/PDZ-RhoGEF and ARHGEF12/LARG). GNA13-dependent Rho signaling subsequently regulates transcription factor AP-1 (activating protein-1). Promotes tumor cell invasion and metastasis by activating RhoA/ROCK signaling pathway. Inhibits CDH1-mediated cell adhesion in process independent from Rho activation. In lymphoid follicles, transmits P2RY8- and S1PR2-dependent signals that lead to inhibition of germinal center (GC) B cell growth and migration outside the GC niche. The polypeptide is Guanine nucleotide-binding protein subunit alpha-13 (Gna13) (Rattus norvegicus (Rat)).